A 252-amino-acid polypeptide reads, in one-letter code: 3-deoxy-manno-octulosonate cytidylyltransferase (252 aa).

It belongs to the KdsB family.

The protein localises to the cytoplasm. The catalysed reaction is 3-deoxy-alpha-D-manno-oct-2-ulosonate + CTP = CMP-3-deoxy-beta-D-manno-octulosonate + diphosphate. It functions in the pathway nucleotide-sugar biosynthesis; CMP-3-deoxy-D-manno-octulosonate biosynthesis; CMP-3-deoxy-D-manno-octulosonate from 3-deoxy-D-manno-octulosonate and CTP: step 1/1. Its pathway is bacterial outer membrane biogenesis; lipopolysaccharide biosynthesis. Activates KDO (a required 8-carbon sugar) for incorporation into bacterial lipopolysaccharide in Gram-negative bacteria. This chain is 3-deoxy-manno-octulosonate cytidylyltransferase, found in Phocaeicola vulgatus (strain ATCC 8482 / DSM 1447 / JCM 5826 / CCUG 4940 / NBRC 14291 / NCTC 11154) (Bacteroides vulgatus).